We begin with the raw amino-acid sequence, 440 residues long: MEYQILKMSSCLFILLFLTPGILCICPLQCTCTERHRHVDCSGRNLTTLPPGLQENIIHLNLSYNHFTDLHNQLTPYTNLRTLDISNNRLESLPAQLPRSLWNMSAANNNIKLLDKSDTAYQWNLKYLDVSKNMLEKVVLIKNTLRSLEVLNLSSNKLWTVPTNMPSKLHIVDLSNNSLTQILPGTLINLTNLTHLYLHNNKFTFIPEQSFDQLLQLQEITLHNNRWSCDHKQNITYLLKWVMETKAHVIGTPCSKQVSSLKEQSMYPTPPGFTSSLFTMSEMQTVDTINSLSMVTQPKVTKTPKQYRGKETTFGVTLSKDTTFSSTDRAVVAYPEDTPTEMTNSHEAAAATLTIHLQDGMSSNASLTSATKSPPSPVTLSIARGMPNNFSEMPRQSTTLNLRREETTANGNTRPPSAASAWKVNASLLLMLNAVVMLAG.

The signal sequence occupies residues 1–24 (MEYQILKMSSCLFILLFLTPGILC). Residues 25 to 55 (ICPLQCTCTERHRHVDCSGRNLTTLPPGLQE) form the LRRNT domain. 2 N-linked (GlcNAc...) asparagine glycosylation sites follow: N45 and N61. LRR repeat units lie at residues 56 to 78 (NIIHLNLSYNHFTDLHNQLTPYT), 79 to 100 (NLRTLDISNNRLESLPAQLPRS), 101 to 121 (LWNMSAANNNIKLLDKSDTAY), 124 to 145 (NLKYLDVSKNMLEKVVLIKNTL), 147 to 168 (SLEVLNLSSNKLWTVPTNMPSK), 169 to 189 (LHIVDLSNNSLTQILPGTLIN), 192 to 213 (NLTHLYLHNNKFTFIPEQSFDQ), and 216 to 239 (QLQEITLHNNRWSCDHKQNITYLL). N103 carries an N-linked (GlcNAc...) asparagine glycan. N152, N176, N189, N192, and N234 each carry an N-linked (GlcNAc...) asparagine glycan. 5 Ser/Thr-rich repeats span residues 229 to 270 (CDHK…YPTP), 271 to 292 (PGFTSSLFTMSEMQTVDTINSL), 293 to 335 (SMVT…VAYP), 336 to 377 (EDTP…PPSP), and 378 to 416 (VTLSIARGMPNNFSEMPRQSTTLNLRREETTANGNTRPP). N-linked (GlcNAc...) asparagine glycosylation is found at N364 and N389. S417 carries GPI-anchor amidated serine lipidation. The propeptide at 418–440 (AASAWKVNASLLLMLNAVVMLAG) is removed in mature form. Residue N425 is glycosylated (N-linked (GlcNAc...) asparagine).

Binds to RTN4R. O-glycosylated in its Ser/Thr-rich repeat domain. As to expression, oligodendrocytes and myelin of the central nervous system.

The protein localises to the cell membrane. Functionally, cell adhesion molecule contributing to the interactive process required for myelination in the central nervous system. The polypeptide is Oligodendrocyte-myelin glycoprotein (Omg) (Mus musculus (Mouse)).